The primary structure comprises 351 residues: Spermidine/putrescine import ATP-binding protein PotA (351 aa).

The 231-residue stretch at 6–236 folds into the ABC transporter domain; it reads LELRNVTKEY…PENAWVANFI (231 aa). 38 to 45 is a binding site for ATP; the sequence is GPSGCGKT.

This sequence belongs to the ABC transporter superfamily. Spermidine/putrescine importer (TC 3.A.1.11.1) family. As to quaternary structure, the complex is composed of two ATP-binding proteins (PotA), two transmembrane proteins (PotB and PotC) and a solute-binding protein (PotD).

The protein resides in the cell membrane. The enzyme catalyses ATP + H2O + polyamine-[polyamine-binding protein]Side 1 = ADP + phosphate + polyamineSide 2 + [polyamine-binding protein]Side 1.. In terms of biological role, part of the ABC transporter complex PotABCD involved in spermidine/putrescine import. Responsible for energy coupling to the transport system. This is Spermidine/putrescine import ATP-binding protein PotA from Mycoplasma capricolum subsp. capricolum (strain California kid / ATCC 27343 / NCTC 10154).